The following is a 229-amino-acid chain: MKKLITANDIRAAHARGEQAMSVVLRASIITPEAREVAELLGFTITECDESVPASTSAQACKSESQRIREAIIAQLPEGQFTESLVAQLMEKVLKEKQSLELGTMQPSFTSVTGKGGVKVIDGSSVKFGRFDGAEPHCVGLTDLVTEQDGSSMAAGFMQWDNAFFPWTLNYDEIDMVLEGELHVRHEGETMIAKAGDVMFIPKGSSIEFGTPTSVRFLYVAWPANWQSV.

Residues 1-100 form a required for interaction with EutM region; it reads MKKLITANDI…EKVLKEKQSL (100 aa).

This sequence belongs to the EutQ cupin-like family. In terms of assembly, homodimer. Interacts with the N-terminus of EutM; a probably cytoplasm-facing helix (EutM 'Val-49' to 'Gln-64') interacts with N-terminus of EutQ. Requires Does not need divalent cations. as cofactor.

The protein localises to the bacterial microcompartment. The catalysed reaction is acetate + ATP = acetyl phosphate + ADP. Its pathway is amine and polyamine degradation; ethanolamine degradation. Functionally, a bidirectional acetate kinase that may drive flux through the ethanolamine (EA) degradation pathway under anoxic conditions found when this bacteria infects the host intestine. It may generate ATP that can be used by other enzymes (EutA and EutT) in the eut pathway. Can use GTP instead of ATP with reduced efficiency. Might be required to correctly target EutE to bacterial microcompartments (BMC). Required for the biogenesis of multiple mobile BMCs per cell. Might serve as an assembly hub for BMC shell proteins. Expression of eutK, eutL, eutM, eutN, eutS (eutSMNLK) in E.coli leads to formation of a single BMC; coexpression of eutQ with eutSMNLK permits E.coli to make cells with more than one mobile BMC, as is usual in vivo. EutS alone also forms BMCs, but in the presence of eutQ both BMCs and protein filaments are formed. Its function is as follows. Expression of the eut operon allows this bacteria to use ethanolamine (EA) as a carbon, nitrogen and energy source. It relies on cobalamin (vitamin B12) both as a cofactor for the ethanolamine ammonia-lyase (EAL) activity and to induce the operon. EA enhances bacterial survival in macrophages in a concentration-dependent manner, suggesting it is an important nutrient during infection. The chain is Acetate kinase EutQ (eutQ) from Salmonella typhimurium (strain LT2 / SGSC1412 / ATCC 700720).